The following is a 118-amino-acid chain: GRB2-related adapter protein-like (118 aa).

Residues 1-58 (MESVALYSFQATESDELAFNKGDTLKILNMEDDQNWYKAELRGVEGFIPKNYIRVKPH) form the SH3 domain. In terms of domain architecture, SH2 spans 60–118 (WYSGRISRQLAEEILMKRNHLGAFLIRESESSPGEFSVSVNNRAQRGPCLGPKSHSRLG). The interval 89–118 (ESSPGEFSVSVNNRAQRGPCLGPKSHSRLG) is disordered. Residues 90 to 103 (SSPGEFSVSVNNRA) show a composition bias toward polar residues.

It belongs to the GRB2/sem-5/DRK family.

This is GRB2-related adapter protein-like (GRAPL) from Homo sapiens (Human).